The primary structure comprises 365 residues: Aminomethyltransferase (365 aa).

The protein belongs to the GcvT family. As to quaternary structure, the glycine cleavage system is composed of four proteins: P, T, L and H.

It catalyses the reaction N(6)-[(R)-S(8)-aminomethyldihydrolipoyl]-L-lysyl-[protein] + (6S)-5,6,7,8-tetrahydrofolate = N(6)-[(R)-dihydrolipoyl]-L-lysyl-[protein] + (6R)-5,10-methylene-5,6,7,8-tetrahydrofolate + NH4(+). Functionally, the glycine cleavage system catalyzes the degradation of glycine. The polypeptide is Aminomethyltransferase (Bacillus pumilus (strain SAFR-032)).